Here is a 395-residue protein sequence, read N- to C-terminus: MAPSPLAWLLRLAAFFHLCTLLPGQHLGMTKCEIMCDKMTSRIPVALLIRYQLNQESCGKRAIVLETTQHRRFCADPKEKWVQDAMKHLDHQAAALTKNGGKFEKRVDNVTPGITLATRGLSPSALTKPESATLEDLALELTTISQEARGTMGTSQEPPAAVTGSSLSTSEAQDAGLTAKPQSIGSFEAADISTTVWPSPAVYQSGSSSWAEEKATESPSTTAPSPQVSTTSPSTPEENVGSEGQPPWVQGQDLSPEKSLGSEEINPVHTDNFQERGPGNTVHPSVAPISSEETPSPELVASGSQAPKIEEPIHATADPQKLSVLITPVPDTQAATRRQAVGLLAFLGLLFCLGVAMFAYQSLQGCPRKMAGEMVEGLRYVPRSCGSNSYVLVPV.

A signal peptide spans methionine 1 to glycine 24. The interval glutamine 25 to glycine 100 is chemokine and involved in interaction with ITGAV:ITGB3 and ITGA4:ITGB1. The Extracellular segment spans residues glutamine 25–threonine 336. 2 disulfides stabilise this stretch: cysteine 32-cysteine 58 and cysteine 36-cysteine 74. Residues glycine 101–threonine 336 form a mucin-like stalk region. Polar residues-rich tracts occupy residues alanine 148 to alanine 172 and alanine 201 to tryptophan 210. 2 disordered regions span residues alanine 148–lysine 180 and alanine 201–glutamine 305. Low complexity predominate over residues serine 218–proline 236. Residues arginine 337–methionine 357 traverse the membrane as a helical segment. The Cytoplasmic portion of the chain corresponds to phenylalanine 358–valine 395.

The protein belongs to the intercrine delta family. Monomer. Forms a ternary complex with CX3CR1 and ITGAV:ITGB3 or ITGA4:ITGB1. In terms of processing, a soluble short 80 kDa form may be released by proteolytic cleavage from the long membrane-anchored form. As to expression, highest levels in brain. Lower levels in kidney, heart and lung. Also found in skeletal muscle and testis. Highly expressed in lesional smooth muscle cells, but not macrophages. Low levels of ABCD-3 mRNA were also found in anti-CD40-stimulated splenic B-cells, but not in resting B-cells. Also expressed in dendritic cells.

It is found in the cell membrane. Its subcellular location is the secreted. Its function is as follows. Chemokine that acts as a ligand for both CX3CR1 and integrins ITGAV:ITGB3 and ITGA4:ITGB1. The CX3CR1-CX3CL1 signaling exerts distinct functions in different tissue compartments, such as immune response, inflammation, cell adhesion and chemotaxis. Regulates leukocyte adhesion and migration processes at the endothelium. Can activate integrins in both a CX3CR1-dependent and CX3CR1-independent manner. In the presence of CX3CR1, activates integrins by binding to the classical ligand-binding site (site 1) in integrins. In the absence of CX3CR1, binds to a second site (site 2) in integrins which is distinct from site 1 and enhances the binding of other integrin ligands to site 1. In terms of biological role, the soluble form is chemotactic for T-cells and monocytes, but not for neutrophils. Functionally, the membrane-bound form promotes adhesion of those leukocytes to endothelial cells. In Mus musculus (Mouse), this protein is Fractalkine.